A 313-amino-acid polypeptide reads, in one-letter code: Olfactory receptor 4M1 (313 aa).

The Extracellular portion of the chain corresponds to 1–25; sequence MEPANDTTVTEFILTGLSQTREVQL. Asparagine 5 is a glycosylation site (N-linked (GlcNAc...) asparagine). A helical transmembrane segment spans residues 26–46; the sequence is VLFVIFLSFYLFILPVNILII. The Cytoplasmic portion of the chain corresponds to 47–57; the sequence is CTIRLDSHLSS. A helical transmembrane segment spans residues 58–78; it reads PMYFLLANLAFLDIWYSSITA. At 79–97 the chain is on the extracellular side; it reads PKMLVDFFVERKIISFGGC. A disulfide bridge connects residues cysteine 97 and cysteine 179. Residues 98-118 traverse the membrane as a helical segment; it reads IAQLFFLHFVGASEMFLLTVM. Residues 119-142 lie on the Cytoplasmic side of the membrane; the sequence is AFDRYAAICRPLHYATIMNRRLCC. A helical transmembrane segment spans residues 143-163; that stretch reads ILVALSWTGGFVHSIIQVALI. Residues 164-204 are Extracellular-facing; sequence VRLPFCGPNELDNYFCDITQVVRIACANTFLEEMVMIFSSG. The helical transmembrane segment at 205 to 225 threads the bilayer; sequence LISVVCFIALLMSYAFLLTML. Over 226 to 238 the chain is Cytoplasmic; the sequence is KKHSSSGESTSRA. The chain crosses the membrane as a helical span at residues 239-259; sequence ISTCYSHITIVVLMFGPSIYI. The Extracellular segment spans residues 260 to 270; the sequence is YARPFDSFSLD. A helical transmembrane segment spans residues 271–291; it reads KVVSVFHTVIFPLLNPIIYTL. The Cytoplasmic portion of the chain corresponds to 292–313; that stretch reads RNKEVKAAMRKLVNRYIFCKEK.

It belongs to the G-protein coupled receptor 1 family. In terms of tissue distribution, highly expressed in liver but not in adipose tissue. Also expressed at high level in testis.

It is found in the cell membrane. Olfactory receptor that acts as a receptor of Asprosin hormone at the surface of hepatocytes to promote hepatocyte glucose release. Also binds Asprosin in the arcuate nucleus of the hypothalamus, thereby stimulating appetite by promoting orexigenic AgRP neuronal activity. In testis, Asprosin-binding promotes sperm progressive motility and enhances male fertility. The activity of this receptor is mediated by G proteins which activate adenylyl cyclase, resulting in an elevation of intracellular cAMP. This is Olfactory receptor 4M1 from Mus musculus (Mouse).